The primary structure comprises 263 residues: Phosphatidylserine decarboxylase proenzyme (263 aa).

Residues aspartate 90, histidine 146, and serine 230 each act as charge relay system; for autoendoproteolytic cleavage activity in the active site. The active-site Schiff-base intermediate with substrate; via pyruvic acid; for decarboxylase activity is serine 230. Residue serine 230 is modified to Pyruvic acid (Ser); by autocatalysis.

It belongs to the phosphatidylserine decarboxylase family. PSD-B subfamily. Prokaryotic type I sub-subfamily. Heterodimer of a large membrane-associated beta subunit and a small pyruvoyl-containing alpha subunit. Pyruvate is required as a cofactor. Post-translationally, is synthesized initially as an inactive proenzyme. Formation of the active enzyme involves a self-maturation process in which the active site pyruvoyl group is generated from an internal serine residue via an autocatalytic post-translational modification. Two non-identical subunits are generated from the proenzyme in this reaction, and the pyruvate is formed at the N-terminus of the alpha chain, which is derived from the carboxyl end of the proenzyme. The autoendoproteolytic cleavage occurs by a canonical serine protease mechanism, in which the side chain hydroxyl group of the serine supplies its oxygen atom to form the C-terminus of the beta chain, while the remainder of the serine residue undergoes an oxidative deamination to produce ammonia and the pyruvoyl prosthetic group on the alpha chain. During this reaction, the Ser that is part of the protease active site of the proenzyme becomes the pyruvoyl prosthetic group, which constitutes an essential element of the active site of the mature decarboxylase.

It localises to the cell membrane. It carries out the reaction a 1,2-diacyl-sn-glycero-3-phospho-L-serine + H(+) = a 1,2-diacyl-sn-glycero-3-phosphoethanolamine + CO2. It functions in the pathway phospholipid metabolism; phosphatidylethanolamine biosynthesis; phosphatidylethanolamine from CDP-diacylglycerol: step 2/2. Catalyzes the formation of phosphatidylethanolamine (PtdEtn) from phosphatidylserine (PtdSer). In Bacillus subtilis (strain 168), this protein is Phosphatidylserine decarboxylase proenzyme.